The sequence spans 398 residues: Alpha-2,8-sialyltransferase 8F (398 aa).

The Cytoplasmic segment spans residues Met-1–Pro-3. Residues Gly-4–Trp-24 traverse the membrane as a helical; Signal-anchor for type II membrane protein segment. The Lumenal portion of the chain corresponds to Cys-25–Ala-398. N-linked (GlcNAc...) asparagine glycosylation is found at Asn-66, Asn-93, Asn-151, and Asn-196. Disulfide bonds link Cys-186-Cys-335 and Cys-200-Cys-395. Substrate contacts are provided by residues Asn-214, Asn-236–Ser-238, and Ser-322–Gly-324. The Proton donor/acceptor role is filled by His-370.

Belongs to the glycosyltransferase 29 family.

It is found in the golgi apparatus membrane. It catalyses the reaction a ganglioside GM3 + CMP-N-acetyl-beta-neuraminate = a ganglioside GD3 + CMP + H(+). It carries out the reaction a ganglioside GM3 (d18:1(4E)) + CMP-N-acetyl-beta-neuraminate = a ganglioside GD3 (d18:1(4E)) + CMP + H(+). The catalysed reaction is a ganglioside GD1a (d18:1(4E)) + CMP-N-acetyl-beta-neuraminate = a ganglioside GT1a (d18:1(4E)) + CMP + H(+). The enzyme catalyses a ganglioside GD1a + CMP-N-acetyl-beta-neuraminate = a ganglioside GT1a + CMP + H(+). It catalyses the reaction a ganglioside GM1b (d18:1(4E)) + CMP-N-acetyl-beta-neuraminate = a ganglioside GD1c (d18:1(4E)) + CMP + H(+). It carries out the reaction a ganglioside GM1b + CMP-N-acetyl-beta-neuraminate = a ganglioside GD1c + CMP + H(+). The catalysed reaction is a ganglioside GM4 (d18:1(4E)) + CMP-N-acetyl-beta-neuraminate = an N-acetyl-alpha-neuraminosyl-(2-&gt;8)-N-acetyl-alpha-neuraminosyl-(2-&gt;3)-beta-D-galactosyl-(1&lt;-&gt;1')-N-acylsphing-4-enine + CMP + H(+). The enzyme catalyses N-acetyl-alpha-neuraminosyl-(2-&gt;3)-beta-D-galactosyl-(1&lt;-&gt;1')-ceramide + CMP-N-acetyl-beta-neuraminate = N-acetyl-alpha-neuraminosyl-(2-&gt;8)-N-acetyl-alpha-neuraminosyl-(2-&gt;3)-beta-D-galactosyl-(1&lt;-&gt;1')-ceramide + CMP + H(+). It catalyses the reaction a ganglioside GT1b (d18:1(4E)) + CMP-N-acetyl-beta-neuraminate = a ganglioside GQ1b (d18:1(4E)) + CMP + H(+). It carries out the reaction a ganglioside GT1b + CMP-N-acetyl-beta-neuraminate = a ganglioside GQ1b + CMP + H(+). It functions in the pathway protein modification; protein glycosylation. Functionally, alpha-2,8-sialyltransferase that prefers O-glycans to N-glycans or glycolipids as acceptor substrates. The minimal acceptor substrate is the NeuAc-alpha-2,3(6)-Gal sequence at the non-reducing end of their carbohydrate groups. The protein is Alpha-2,8-sialyltransferase 8F (ST8SIA6) of Pan troglodytes (Chimpanzee).